The sequence spans 358 residues: SPbeta prophage-derived probable integrase/recombinase YopP (358 aa).

The Core-binding (CB) domain maps to 23–114; it reads NKDIRSSSGN…SLKMLYTYLE (92 aa). The Tyr recombinase domain maps to 137–319; that stretch reads KNWDKTTQTE…NIANSAGVTM (183 aa). Active-site residues include R178, K206, H268, and H295. Catalysis depends on Y304, which acts as the O-(3'-phospho-DNA)-tyrosine intermediate.

This sequence belongs to the 'phage' integrase family.

In terms of biological role, probable recombinase that does not seem to have a role in chromosome dimer resolution per se but rather may have some facilitative role during chromosome partitioning in general. This chain is SPbeta prophage-derived probable integrase/recombinase YopP (yopP), found in Bacillus subtilis (strain 168).